The primary structure comprises 874 residues: MKTTAEIRQSFLDFFHSKGHQVVESSSLVPENDPTLLFTNAGMNQFKDVFLGMDKRPYSRATTAQRCVRPGGKHNDLENVGYTARHHTFFEMLGNFSFGDYFKQDAINFAWEYLTSPQWLGLPKEKLWVTVYETDDEAYNIWNKDVGVPAERIIRIGDNKGSPYASDNFWAMGDTGPCGPCTEIFYDHGDHIWGGPPGSPEEDGDRYIEIWNVVFMQFNRLADGTMEKLPRPSVDTGMGLERISAVLQHVNSNYEIDIFKTLIAKTAEIVGATDLTNKSLRVIADHIRSCAYLIADGVIPSNEGRGYVLRRIIRRAVRHGHLLGAKESFFYKLVPTLIDVMAEAGKDVKAKQTNVEKLLRLEEEQFARTLERGLSLLDEALSQVKDGILSGEVAFKLYDTYGFPLDLTADVCRERNITIDEQAFDRKMEAQRTRAQAASQFGVDYNSVIRVDGETKFEGYTEVESQAKITALFYDGKSVESIEAGQSAVVILENTPFYAESGGQIGDSGYLSTQSVTFNVKDTQKYGQVFGHIGELTQGSLKVGQSVNAIVDAKRRHNTSLNHSATHLLHAALRQILGLHVVQKGSLVSDKALRFDFAQPEAITKEQLSEIETLVNQKIRANFPVQTDIMDIDSAKAKGAMALFGEKYGDKVRVLTMGDFSIELCGGIHAKRTGDIGLFKIITENAVAAGIRRIEAVTGQNAIDWLHNQQRILTQSADLLKSDVNTLAEKIQQLQDKAKKVEKELQGLKEKAAMQAGSYFVKSAVKINGVSVIAQQLDGIETKSLRVMVDDLKNQLGSGVIAFASILDEKVNLVVGVTNDLTAKIKAGELVNLMAQQVGGKGGGRPDMAMAGGSQLENVTQAIKVAQDWLNKNL.

Residues His563, His567, Cys665, and His669 each coordinate Zn(2+).

This sequence belongs to the class-II aminoacyl-tRNA synthetase family. Zn(2+) is required as a cofactor.

Its subcellular location is the cytoplasm. It carries out the reaction tRNA(Ala) + L-alanine + ATP = L-alanyl-tRNA(Ala) + AMP + diphosphate. Catalyzes the attachment of alanine to tRNA(Ala) in a two-step reaction: alanine is first activated by ATP to form Ala-AMP and then transferred to the acceptor end of tRNA(Ala). Also edits incorrectly charged Ser-tRNA(Ala) and Gly-tRNA(Ala) via its editing domain. This chain is Alanine--tRNA ligase, found in Haemophilus influenzae (strain ATCC 51907 / DSM 11121 / KW20 / Rd).